Consider the following 388-residue polypeptide: P2X purinoceptor 4 (388 aa).

Over Met1 to Arg33 the chain is Cytoplasmic. The chain crosses the membrane as a helical span at residues Thr34–Tyr54. Over Gln55–Asn338 the chain is Extracellular. 2 residues coordinate ATP: Lys67 and Lys69. Residues Lys67 and Lys69 each coordinate CTP. Residues Asn75, Asn110, Asn131, Asn153, and Asn184 are each glycosylated (N-linked (GlcNAc...) asparagine). Disulfide bonds link Cys116/Cys165, Cys126/Cys149, and Cys132/Cys159. 2 residues coordinate ATP: Thr186 and Leu188. Thr186 is a binding site for CTP. N-linked (GlcNAc...) asparagine glycans are attached at residues Asn199 and Asn208. Disulfide bonds link Cys217/Cys227 and Cys261/Cys270. Asn293, Arg295, and Lys313 together coordinate ATP. CTP contacts are provided by Asn293, Arg295, and Lys313. A helical transmembrane segment spans residues Ile339 to Tyr359. The Cytoplasmic portion of the chain corresponds to Cys360 to Gln388.

It belongs to the P2X receptor family. Functional P2RXs are organized as homomeric and heteromeric trimers. Forms heterotrimer with P2RX1. Interacts with P2RX7 (via C-terminus); this interaction is functional only in the presence of ATP. Forms heterotrimer with P2RX4; functional differences between homomeric P2RX4 and P2RX4/6 heterotrimer are minor. Interacts with AP1M2.

The protein resides in the cell membrane. It is found in the lysosome membrane. It carries out the reaction K(+)(in) = K(+)(out). The enzyme catalyses Na(+)(in) = Na(+)(out). The catalysed reaction is Ca(2+)(in) = Ca(2+)(out). Its activity is regulated as follows. Activated by ATP. pH-dependent and inhibited by acidic pH. ATP-gated nonselective transmembrane cation channel permeable to potassium, sodium and calcium. CTP, but not GTP or UTP, functions as a weak affinity agonist for P2RX4. Activated by extracellularly released ATP, it plays multiple role in immunity and central nervous system physiology. Could also function as an ATP-gated cation channel of lysosomal membranes. This chain is P2X purinoceptor 4 (P2RX4), found in Bos taurus (Bovine).